A 162-amino-acid polypeptide reads, in one-letter code: Caveolin-2 (162 aa).

At methionine 1–lysine 86 the chain is on the cytoplasmic side. Tyrosine 19 carries the post-translational modification Phosphotyrosine; by SRC. Residues serine 20 and serine 23 each carry the phosphoserine modification. Tyrosine 27 carries the post-translational modification Phosphotyrosine; by SRC. Position 36 is a phosphoserine (serine 36). Residues phenylalanine 87–leucine 107 constitute an intramembrane region (helical). The Cytoplasmic portion of the chain corresponds to serine 108–aspartate 162.

This sequence belongs to the caveolin family. As to quaternary structure, monomer or homodimer. Interacts with CAV1; the interaction forms a stable heterooligomeric complex that is required for targeting to lipid rafts and for caveolae formation. Tyrosine phosphorylated forms do not form heterooligomers with the Tyr-19-phosphorylated form existing as a monomer or dimer, and the Tyr-27-form as a monomer only. Interacts (tyrosine phosphorylated form) with the SH2 domain-containing proteins, RASA1, NCK1 and SRC. Interacts (tyrosine phosphorylated form) with INSR, the interaction (Tyr-27-phosphorylated form) is increased on insulin stimulation. Interacts (Tyr-19 phosphorylated form) with MAPK1 (phosphorylated form); the interaction, promoted by insulin, leads to nuclear location and MAPK1 activation. Interacts with STAT3; the interaction is increased on insulin-induced tyrosine phosphorylation leading to STAT activation. Post-translationally, phosphorylated on serine and tyrosine residues. CAV1 promotes phosphorylation on Ser-23 which then targets the complex to the plasma membrane, lipid rafts and caveolae. Phosphorylation on Ser-36 appears to modulate mitosis in endothelial cells. Phosphorylation on both Tyr-19 and Tyr-27 is required for insulin-induced 'Ser-727' phosphorylation of STAT3 and its activation. Phosphorylation on Tyr-19 is required for insulin-induced phosphorylation of MAPK1 and DNA binding of STAT3. Tyrosine phosphorylation is induced by both EGF and insulin (By. similarity).

The protein resides in the nucleus. It is found in the cytoplasm. The protein localises to the golgi apparatus membrane. It localises to the cell membrane. Its subcellular location is the membrane. The protein resides in the caveola. Its function is as follows. May act as a scaffolding protein within caveolar membranes. Interacts directly with G-protein alpha subunits and can functionally regulate their activity. Acts as an accessory protein in conjunction with CAV1 in targeting to lipid rafts and driving caveolae formation. The Ser-36 phosphorylated form has a role in modulating mitosis in endothelial cells. Positive regulator of cellular mitogenesis of the MAPK signaling pathway. Required for the insulin-stimulated nuclear translocation and activation of MAPK1 and STAT3, and the subsequent regulation of cell cycle progression. The chain is Caveolin-2 (CAV2) from Gorilla gorilla gorilla (Western lowland gorilla).